Consider the following 316-residue polypeptide: UPF0613 protein PB24D3.06c (316 aa).

It belongs to the UPF0613 family.

It is found in the cytoplasm. Its subcellular location is the nucleus. This chain is UPF0613 protein PB24D3.06c, found in Schizosaccharomyces pombe (strain 972 / ATCC 24843) (Fission yeast).